The sequence spans 208 residues: Probable adenylyl-sulfate kinase (208 aa).

38–45 (GLSGSGKS) is an ATP binding site. Catalysis depends on Ser-112, which acts as the Phosphoserine intermediate.

The protein belongs to the APS kinase family.

The catalysed reaction is adenosine 5'-phosphosulfate + ATP = 3'-phosphoadenylyl sulfate + ADP + H(+). Its pathway is sulfur metabolism; hydrogen sulfide biosynthesis; sulfite from sulfate: step 2/3. Its function is as follows. Catalyzes the synthesis of activated sulfate. In Halalkalibacterium halodurans (strain ATCC BAA-125 / DSM 18197 / FERM 7344 / JCM 9153 / C-125) (Bacillus halodurans), this protein is Probable adenylyl-sulfate kinase.